A 296-amino-acid polypeptide reads, in one-letter code: Bifunctional protein FolD (296 aa).

NADP(+)-binding positions include Gly170–Ser172 and Ser195.

The protein belongs to the tetrahydrofolate dehydrogenase/cyclohydrolase family. As to quaternary structure, homodimer.

The enzyme catalyses (6R)-5,10-methylene-5,6,7,8-tetrahydrofolate + NADP(+) = (6R)-5,10-methenyltetrahydrofolate + NADPH. It catalyses the reaction (6R)-5,10-methenyltetrahydrofolate + H2O = (6R)-10-formyltetrahydrofolate + H(+). It participates in one-carbon metabolism; tetrahydrofolate interconversion. Catalyzes the oxidation of 5,10-methylenetetrahydrofolate to 5,10-methenyltetrahydrofolate and then the hydrolysis of 5,10-methenyltetrahydrofolate to 10-formyltetrahydrofolate. This is Bifunctional protein FolD from Rhodospirillum rubrum (strain ATCC 11170 / ATH 1.1.1 / DSM 467 / LMG 4362 / NCIMB 8255 / S1).